Consider the following 458-residue polypeptide: Tubulin beta chain (458 aa).

Positions 11, 69, 138, 142, 143, 144, 204, and 226 each coordinate GTP. E69 serves as a coordination point for Mg(2+). The segment at 426–458 (EAATVEGEEEEDEYAEGGVVNGDQSYDEPYQAA) is disordered. The span at 431–440 (EGEEEEDEYA) shows a compositional bias: acidic residues.

This sequence belongs to the tubulin family. In terms of assembly, dimer of alpha and beta chains. A typical microtubule is a hollow water-filled tube with an outer diameter of 25 nm and an inner diameter of 15 nM. Alpha-beta heterodimers associate head-to-tail to form protofilaments running lengthwise along the microtubule wall with the beta-tubulin subunit facing the microtubule plus end conferring a structural polarity. Microtubules usually have 13 protofilaments but different protofilament numbers can be found in some organisms and specialized cells. The cofactor is Mg(2+).

Its subcellular location is the cytoplasm. The protein resides in the cytoskeleton. Tubulin is the major constituent of microtubules, a cylinder consisting of laterally associated linear protofilaments composed of alpha- and beta-tubulin heterodimers. Microtubules grow by the addition of GTP-tubulin dimers to the microtubule end, where a stabilizing cap forms. Below the cap, tubulin dimers are in GDP-bound state, owing to GTPase activity of alpha-tubulin. The sequence is that of Tubulin beta chain (TUBB1) from Pyropia yezoensis (Susabi-nori).